Consider the following 286-residue polypeptide: 4-hydroxybenzoate octaprenyltransferase (286 aa).

7 helical membrane passes run 20-40, 43-63, 95-115, 142-162, 167-187, 210-230, and 234-254; these read IGTL…AGGM, LKVL…GCII, ILFA…NPLV, FLGV…TGEV, WWLF…YAMV, QIIG…GWAA, and LVYG…QKLI.

Belongs to the UbiA prenyltransferase family. Mg(2+) is required as a cofactor.

It localises to the cell inner membrane. The enzyme catalyses all-trans-octaprenyl diphosphate + 4-hydroxybenzoate = 4-hydroxy-3-(all-trans-octaprenyl)benzoate + diphosphate. It participates in cofactor biosynthesis; ubiquinone biosynthesis. In terms of biological role, catalyzes the prenylation of para-hydroxybenzoate (PHB) with an all-trans polyprenyl group. Mediates the second step in the final reaction sequence of ubiquinone-8 (UQ-8) biosynthesis, which is the condensation of the polyisoprenoid side chain with PHB, generating the first membrane-bound Q intermediate 3-octaprenyl-4-hydroxybenzoate. The protein is 4-hydroxybenzoate octaprenyltransferase of Shewanella sediminis (strain HAW-EB3).